The primary structure comprises 895 residues: Receptor-like protein kinase FERONIA (895 aa).

The first 27 residues, 1–27 (MKITEGRFRLSLLLLLLLISAATLISA), serve as a signal peptide directing secretion. The Extracellular segment spans residues 28 to 447 (ADYSPTEKIL…TTRKSKSNTA (420 aa)). N-linked (GlcNAc...) asparagine glycans are attached at residues N46, N124, N142, N171, N219, N269, N305, N330, N345, and N410. A helical membrane pass occupies residues 448 to 468 (IIAGAASGAVVLALIIGFCVF). The Cytoplasmic portion of the chain corresponds to 469 to 895 (GAYRRRKRGD…FSQIMNPKGR (427 aa)). Residues 536 to 810 (FDESRVLGVG…GDVLWNLEFA (275 aa)) form the Protein kinase domain. Residues 542–550 (LGVGGFGKV) and K565 contribute to the ATP site. The active-site Proton acceptor is the D661. The tract at residues 844–895 (NDKSSDVYEGNVTDSRSSGIDMSIGGRSLASEDSDGLTPSAVFSQIMNPKGR) is disordered. A phosphoserine mark is found at S858, S866, S871, and S874. The span at 884–895 (AVFSQIMNPKGR) shows a compositional bias: polar residues.

Belongs to the protein kinase superfamily. Ser/Thr protein kinase family. As to quaternary structure, interacts with ROPGEF1. Interacts with RALF1; triggering phosphorylation status and subsequent activation. Interacts with LRE and LLG1. Interacts, via its extracellular domain, with FERONIA at the synergid cell surface. Autophosphorylated. Post-translationally, phosphorylated at Ser-858, Ser-871 and Ser-874 upon activation by RALF1. Expressed in leaves, buds, flowers, siliques, young ovules primordia, and young anthers with immature pollen, but not detected in mature pollen. Highest expression in the synergid cells of the female gametophyte.

The protein resides in the cell membrane. It catalyses the reaction L-seryl-[protein] + ATP = O-phospho-L-seryl-[protein] + ADP + H(+). The enzyme catalyses L-threonyl-[protein] + ATP = O-phospho-L-threonyl-[protein] + ADP + H(+). Functionally, receptor-like protein kinase that mediates the female control of male gamete delivery during fertilization, including growth cessation of compatible pollen tubes ensuring a reproductive isolation barriers, by regulating MLO7 subcellular polarization upon pollen tube perception in the female gametophyte synergids. Required for cell elongation during vegetative growth, mostly in a brassinosteroids- (BR-) independent manner. Acts as an upstream regulator for the Rac/Rop-signaling pathway that controls ROS-mediated root hair development. Seems to regulate a cross-talk between brassinosteroids and ethylene signaling pathways during hypocotyl elongation. Negative regulator of brassinosteroid response in light-grown hypocotyls, but required for brassinosteroid response in etiolated seedlings. Mediates sensitivity to powdery mildew (e.g. Golovinomyces orontii). Positive regulator of auxin-promoted growth that represses the abscisic acid (ABA) signaling via the activation of ABI2 phosphatase. Required for RALF1-mediated extracellular alkalinization in a signaling pathway preventing cell expansion. This Arabidopsis thaliana (Mouse-ear cress) protein is Receptor-like protein kinase FERONIA.